A 476-amino-acid polypeptide reads, in one-letter code: Adenosylhomocysteinase (476 aa).

Substrate contacts are provided by Thr-67, Asp-142, and Glu-202. Residue 203–205 coordinates NAD(+); that stretch reads TTT. 2 residues coordinate substrate: Lys-232 and Asp-236. Residues Asn-237, 266–271, Glu-289, Asn-324, 345–347, and Asn-390 each bind NAD(+); these read GYGDVG and IGH.

This sequence belongs to the adenosylhomocysteinase family. It depends on NAD(+) as a cofactor.

It localises to the cytoplasm. It carries out the reaction S-adenosyl-L-homocysteine + H2O = L-homocysteine + adenosine. The protein operates within amino-acid biosynthesis; L-homocysteine biosynthesis; L-homocysteine from S-adenosyl-L-homocysteine: step 1/1. Its function is as follows. May play a key role in the regulation of the intracellular concentration of adenosylhomocysteine. The sequence is that of Adenosylhomocysteinase from Parasynechococcus marenigrum (strain WH8102).